An 825-amino-acid chain; its full sequence is NT-3 growth factor receptor (825 aa).

The N-terminal stretch at 1–31 is a signal peptide; sequence MDVSLCPAKCSFWRIFLLGSVWLDYVGSVLA. 2 disulfide bridges follow: Cys-32/Cys-38 and Cys-36/Cys-45. Residues 32–429 are Extracellular-facing; it reads CPANCVCSKT…TVTHKPEEDT (398 aa). Asn-68, Asn-72, and Asn-79 each carry an N-linked (GlcNAc...) asparagine glycan. 2 LRR repeats span residues 104–125 and 128–149; these read GLQKLTIKNSGLRSIQPRAFAK and HLRYINLSSNRLTTLSWQLFQT. N-linked (GlcNAc...) asparagine glycosylation is found at Asn-133 and Asn-163. The LRRCT domain maps to 160–209; that stretch reads NFFNCSCDIRWMQLWQEQGEAKLNSQNLYCINTDGSQLPLFRMNISQCDL. 2 cysteine pairs are disulfide-bonded: Cys-164–Cys-189 and Cys-166–Cys-207. Residues Asn-203, Asn-218, Asn-232, Asn-259, Asn-267, Asn-272, and Asn-294 are each glycosylated (N-linked (GlcNAc...) asparagine). 2 consecutive Ig-like C2-type domains span residues 210-300 and 309-382; these read PEIS…VALT and SLEE…IAKN. The cysteines at positions 231 and 284 are disulfide-linked. Residues Cys-320 and Cys-362 are joined by a disulfide bond. Residues Asn-375 and Asn-388 are each glycosylated (N-linked (GlcNAc...) asparagine). A helical membrane pass occupies residues 430–453; the sequence is FGVSIAVGLAAFACVLLVVLFVMI. The Cytoplasmic portion of the chain corresponds to 454-825; sequence NKYGRRSKFG…ATPIYLDILG (372 aa). Ser-493 carries the post-translational modification Phosphoserine. Tyr-516 carries the post-translational modification Phosphotyrosine; by autocatalysis. The Protein kinase domain maps to 538–825; sequence IVLKRELGEG…ATPIYLDILG (288 aa). ATP is bound by residues 544-552 and Lys-572; that span reads LGEGAFGKV. The Proton acceptor role is filled by Asp-679. Phosphotyrosine; by autocatalysis occurs at positions 705, 709, and 710.

This sequence belongs to the protein kinase superfamily. Tyr protein kinase family. Insulin receptor subfamily. Exists in a dynamic equilibrium between monomeric (low affinity) and dimeric (high affinity) structures. Binds SH2B2. Interacts with SQSTM1 and KIDINS220. Interacts with PTPRS. Interacts with MAPK8IP3/JIP3. In terms of processing, ligand-mediated auto-phosphorylation.

The protein localises to the membrane. It catalyses the reaction L-tyrosyl-[protein] + ATP = O-phospho-L-tyrosyl-[protein] + ADP + H(+). Receptor tyrosine kinase involved in nervous system and probably heart development. Upon binding of its ligand NTF3/neurotrophin-3, NTRK3 autophosphorylates and activates different signaling pathways, including the phosphatidylinositol 3-kinase/AKT and the MAPK pathways, that control cell survival and differentiation. The chain is NT-3 growth factor receptor (NTRK3) from Pan troglodytes (Chimpanzee).